A 431-amino-acid chain; its full sequence is C4-dicarboxylate transport protein (431 aa).

8 helical membrane-spanning segments follow: residues 8 to 28 (ILYVQVLFAIFVGILLGHFWP), 44 to 64 (LIKMIIGPIIFCTVVTGIAGM), 78 to 98 (LLYFEIVSTFALLIGLGAAHL), 148 to 168 (GDILQILLVSLFFGAALAAIG), 188 to 208 (IVHVITKVAPIGAFGAMAFTI), 222 to 242 (LIGTFYFTAIVFVVFVLGAIA), 307 to 327 (IYMTMAVIFIAQATGIELTLL), and 355 to 375 (AATLAVVPTIPVAGMVLILGI).

It belongs to the dicarboxylate/amino acid:cation symporter (DAACS) (TC 2.A.23) family.

It localises to the cell inner membrane. Its function is as follows. Responsible for the transport of dicarboxylates such as succinate, fumarate, and malate from the periplasm across the membrane. This Cupriavidus pinatubonensis (strain JMP 134 / LMG 1197) (Cupriavidus necator (strain JMP 134)) protein is C4-dicarboxylate transport protein.